The following is a 132-amino-acid chain: Small ribosomal subunit protein uS8 (132 aa).

The protein belongs to the universal ribosomal protein uS8 family. Part of the 30S ribosomal subunit. Contacts proteins S5 and S12.

In terms of biological role, one of the primary rRNA binding proteins, it binds directly to 16S rRNA central domain where it helps coordinate assembly of the platform of the 30S subunit. This is Small ribosomal subunit protein uS8 from Streptococcus pyogenes serotype M49 (strain NZ131).